Consider the following 258-residue polypeptide: Synapse differentiation-inducing gene protein 1 (258 aa).

Topologically, residues 1-181 (MDGIIEQKSV…NFLMMPPRDH (181 aa)) are cytoplasmic. The residue at position 137 (Ser-137) is a Phosphoserine. Residues 182–202 (LGLSVFSMLCCFWPLGIAAFY) form a helical membrane-spanning segment. The Extracellular portion of the chain corresponds to 203–228 (LSHETNKAVAKGDFHQASTSSRRALF). The segment at residues 229 to 249 (LAVLSITIGTGIYVGVAVALI) is an intramembrane region (helical). The Extracellular segment spans residues 250–258 (AYLSKNNHL).

Belongs to the CD225/Dispanin family. In terms of assembly, homodimer. Interacts with GRIA1 and GRIA2. As to expression, brain-specific. Expressed in Purkinje neurons in cerebellum. Also detected in the hippocampus. Found at excitatory synapses and postsynaptic cells.

It localises to the cell membrane. The protein localises to the early endosome membrane. It is found in the postsynaptic density membrane. The protein resides in the synapse. Its subcellular location is the cell projection. It localises to the dendrite. The protein localises to the dendritic spine. In terms of biological role, may regulate AMPA receptor content at nascent synapses, and have a role in postsynaptic development and maturation. The polypeptide is Synapse differentiation-inducing gene protein 1 (Syndig1) (Mus musculus (Mouse)).